Consider the following 200-residue polypeptide: Lipid A acyltransferase PagP (200 aa).

Residues 1–24 form the signal peptide; it reads MRLKLTSHTCLFALSSLLVTPAFA. Catalysis depends on residues histidine 72, aspartate 115, and serine 116.

This sequence belongs to the lipid A palmitoyltransferase family. As to quaternary structure, homodimer.

It is found in the cell outer membrane. It catalyses the reaction a lipid A + a 1,2-diacyl-sn-glycero-3-phosphocholine = a hepta-acyl lipid A + a 2-acyl-sn-glycero-3-phosphocholine. It carries out the reaction a lipid IVA + a 1,2-diacyl-sn-glycero-3-phosphocholine = a lipid IVB + a 2-acyl-sn-glycero-3-phosphocholine. The catalysed reaction is a lipid IIA + a 1,2-diacyl-sn-glycero-3-phosphocholine = a lipid IIB + a 2-acyl-sn-glycero-3-phosphocholine. Functionally, transfers a fatty acid residue from the sn-1 position of a phospholipid to the N-linked hydroxyfatty acid chain on the proximal unit of lipid A or its precursors. This is Lipid A acyltransferase PagP from Dickeya dadantii (strain 3937) (Erwinia chrysanthemi (strain 3937)).